Reading from the N-terminus, the 158-residue chain is UPF0303 protein SCO2848 (158 aa).

The protein belongs to the UPF0303 family.

This chain is UPF0303 protein SCO2848, found in Streptomyces coelicolor (strain ATCC BAA-471 / A3(2) / M145).